The chain runs to 166 residues: Phosphopantetheine adenylyltransferase (166 aa).

S9 contacts substrate. Residues 9-10 (SF) and H17 each bind ATP. Substrate-binding residues include K41, L74, and K88. ATP contacts are provided by residues 89-91 (GLR), E99, and 123-129 (YVHLSST).

The protein belongs to the bacterial CoaD family. In terms of assembly, homohexamer. It depends on Mg(2+) as a cofactor.

It is found in the cytoplasm. It catalyses the reaction (R)-4'-phosphopantetheine + ATP + H(+) = 3'-dephospho-CoA + diphosphate. Its pathway is cofactor biosynthesis; coenzyme A biosynthesis; CoA from (R)-pantothenate: step 4/5. In terms of biological role, reversibly transfers an adenylyl group from ATP to 4'-phosphopantetheine, yielding dephospho-CoA (dPCoA) and pyrophosphate. The chain is Phosphopantetheine adenylyltransferase from Paenarthrobacter aurescens (strain TC1).